We begin with the raw amino-acid sequence, 115 residues long: DNA-binding protein NP_4416A (115 aa).

A compositionally biased stretch (acidic residues) spans 1–11 (MSGEPTDEDLE). Positions 1–46 (MSGEPTDEDLEELRKKKMEQLKEQGGEGQSEAAEAQRQQAEAQKKA) are disordered. Residues 12–25 (ELRKKKMEQLKEQG) are compositionally biased toward basic and acidic residues. Residues 29-41 (QSEAAEAQRQQAE) show a composition bias toward low complexity.

It belongs to the PDCD5 family.

This Natronomonas pharaonis (strain ATCC 35678 / DSM 2160 / CIP 103997 / JCM 8858 / NBRC 14720 / NCIMB 2260 / Gabara) (Halobacterium pharaonis) protein is DNA-binding protein NP_4416A.